A 198-amino-acid chain; its full sequence is NADH-quinone oxidoreductase subunit B (198 aa).

[4Fe-4S] cluster contacts are provided by Cys62, Cys63, Cys128, and Cys158.

This sequence belongs to the complex I 20 kDa subunit family. NDH-1 is composed of 14 different subunits. Subunits NuoB, C, D, E, F, and G constitute the peripheral sector of the complex. Requires [4Fe-4S] cluster as cofactor.

The protein localises to the cell inner membrane. The enzyme catalyses a quinone + NADH + 5 H(+)(in) = a quinol + NAD(+) + 4 H(+)(out). In terms of biological role, NDH-1 shuttles electrons from NADH, via FMN and iron-sulfur (Fe-S) centers, to quinones in the respiratory chain. The immediate electron acceptor for the enzyme in this species is believed to be a menaquinone. Couples the redox reaction to proton translocation (for every two electrons transferred, four hydrogen ions are translocated across the cytoplasmic membrane), and thus conserves the redox energy in a proton gradient. The protein is NADH-quinone oxidoreductase subunit B of Phocaeicola vulgatus (strain ATCC 8482 / DSM 1447 / JCM 5826 / CCUG 4940 / NBRC 14291 / NCTC 11154) (Bacteroides vulgatus).